A 91-amino-acid polypeptide reads, in one-letter code: Uteroglobin (91 aa).

Residues 1-21 form the signal peptide; the sequence is MKLAVTLTLVTLALCCSSASA.

The protein belongs to the secretoglobin family. Antiparallel homodimer; disulfide-linked. Interaction with LMBR1L has been observed in PubMed:16423471, but not in PubMed:23964685. As to expression, club cells (nonciliated cells of the surface epithelium of the pulmonary airways).

The protein localises to the secreted. In terms of biological role, binds phosphatidylcholine, phosphatidylinositol, polychlorinated biphenyls (PCB) and weakly progesterone, potent inhibitor of phospholipase A2. This Homo sapiens (Human) protein is Uteroglobin (SCGB1A1).